We begin with the raw amino-acid sequence, 1187 residues long: Tyrosine-protein phosphatase non-receptor type 14 (1187 aa).

The FERM domain occupies 21-306 (FVTRIRLLDS…TRHKFYKQNK (286 aa)). Ser-314, Ser-461, and Ser-486 each carry phosphoserine. Polar residues predominate over residues 510-524 (LVSPSDQRNPKNNVV). Residues 510–531 (LVSPSDQRNPKNNVVPSKPGAS) form a disordered region. A phosphoserine mark is found at Ser-591, Ser-593, Ser-594, and Ser-642. Disordered regions lie at residues 671–690 (LREQ…PQLP) and 787–824 (KAIS…KKEP). Residues 815-824 (SVKERVKKEP) are compositionally biased toward basic and acidic residues. Ser-831 carries the post-translational modification Phosphoserine. A Tyrosine-protein phosphatase domain is found at 909–1180 (VFTEYEQIPK…KFVYQVLIQF (272 aa)). Residues Asp-1079, 1121–1127 (CSAGVGR), and Gln-1165 contribute to the substrate site. Cys-1121 serves as the catalytic Phosphocysteine intermediate.

The protein belongs to the protein-tyrosine phosphatase family. Non-receptor class subfamily. In terms of assembly, interacts with FLT4; the interaction is enhanced by stimulation with VEGFC. Interacts (via PPxY motifs) with YAP1 (via WW domains); this interaction leads to the cytoplasmic sequestration of YAP1 and inhibits its transcriptional co-activator activity. Post-translationally, ubiquitinated by the ECS (Elongin BC-CUL2/5-SOCS-box protein)/LRR1 E3 ligase complex and subsequently targeted to proteasomal degradation. In terms of tissue distribution, ubiquitous.

The protein resides in the cytoplasm. The protein localises to the cytoskeleton. It is found in the nucleus. It carries out the reaction O-phospho-L-tyrosyl-[protein] + H2O = L-tyrosyl-[protein] + phosphate. In terms of biological role, protein tyrosine phosphatase which may play a role in the regulation of lymphangiogenesis, cell-cell adhesion, cell-matrix adhesion, cell migration, cell growth and also regulates TGF-beta gene expression, thereby modulating epithelial-mesenchymal transition. Mediates beta-catenin dephosphorylation at adhesion junctions. Acts as a negative regulator of the oncogenic property of YAP, a downstream target of the hippo pathway, in a cell density-dependent manner. May function as a tumor suppressor. In Homo sapiens (Human), this protein is Tyrosine-protein phosphatase non-receptor type 14 (PTPN14).